The chain runs to 212 residues: ER lumen protein-retaining receptor 1 (212 aa).

At Met-1–Phe-4 the chain is on the lumenal side. The helical transmembrane segment at Arg-5–Trp-24 threads the bilayer. Topologically, residues Lys-25–Ile-32 are cytoplasmic. The helical transmembrane segment at Ser-33 to Phe-52 threads the bilayer. Positions Arg-47 to Tyr-48 are interaction with the K-D-E-L motif on target proteins. The Lumenal segment spans residues Thr-53 to Leu-58. Residues Tyr-59–Tyr-79 form a helical membrane-spanning segment. The Cytoplasmic portion of the chain corresponds to Ser-80–Thr-92. A helical transmembrane segment spans residues Phe-93–Asn-110. At His-111–Leu-116 the chain is on the lumenal side. Residues Glu-117 to Leu-135 traverse the membrane as a helical segment. The Cytoplasmic segment spans residues Phe-136–Ser-149. A helical membrane pass occupies residues His-150–Trp-168. Positions Arg-159–Arg-169 are interaction with the K-D-E-L motif on target proteins. Over Arg-169–Leu-178 the chain is Lumenal. The chain crosses the membrane as a helical span at residues Ile-179 to Ile-199. Over Thr-200–Ala-212 the chain is Cytoplasmic. The important for recycling of cargo proteins with the sequence motif K-D-E-L from the Golgi to the endoplasmic reticulum stretch occupies residues Lys-204–Lys-207. A Phosphoserine; by PKA modification is found at Ser-209.

Belongs to the ERD2 family. Upon ligand binding the receptor oligomerizes and interacts with components of the transport machinery such as ARFGAP1 and ARF1. Post-translationally, phosphorylation by PKA at Ser-209 is required for endoplasmic reticulum retention function.

It is found in the golgi apparatus membrane. The protein localises to the cytoplasmic vesicle. It localises to the COPI-coated vesicle membrane. Its subcellular location is the endoplasmic reticulum membrane. The protein resides in the endoplasmic reticulum-Golgi intermediate compartment membrane. In terms of biological role, receptor for the C-terminal sequence motif K-D-E-L that is present on endoplasmic reticulum resident proteins and that mediates their recycling from the Golgi back to the endoplasmic reticulum. In Mus musculus (Mouse), this protein is ER lumen protein-retaining receptor 1 (Kdelr1).